The sequence spans 156 residues: C-type lectin lectoxin-Phi1 (156 aa).

Positions 1-23 (MGRFIFVSLGLLVLAFSLSGIGA) are cleaved as a signal peptide. Intrachain disulfides connect Cys-27/Cys-38, Cys-55/Cys-154, and Cys-129/Cys-146. Residues 34 to 155 (HNVSCYKLIN…CNRRHRFLCK (122 aa)) form the C-type lectin domain. Asn-35 and Asn-109 each carry an N-linked (GlcNAc...) asparagine glycan. Positions 119–121 (EPN) match the Mannose-binding motif. Ca(2+) contacts are provided by Glu-127, Asn-142, and Asp-143.

It belongs to the true venom lectin family. In terms of tissue distribution, expressed by the venom gland.

It localises to the secreted. Mannose-binding lectin which recognizes specific carbohydrate structures and agglutinates a variety of animal cells by binding to cell-surface glycoproteins and glycolipids. May be a calcium-dependent lectin. The chain is C-type lectin lectoxin-Phi1 from Philodryas olfersii (Green snake).